Reading from the N-terminus, the 614-residue chain is Zinc metalloproteinase-disintegrin-like protein H4 subunit A (614 aa).

The N-terminal stretch at 1–20 (MIQPLLVVTCLVVFPYQVSS) is a signal peptide. Residues 21-193 (IILESGNVND…RKASQLVATS (173 aa)) constitute a propeptide that is removed on maturation. E194 bears the Pyrrolidone carboxylic acid (Glu) mark. Residues 201–397 (KYIELVIVVD…IKSKCIDNKP (197 aa)) enclose the Peptidase M12B domain. A glycan (N-linked (GlcNAc...) asparagine) is linked at N220. 17 disulfide bridges follow: C312-C392, C352-C376, C354-C359, C408-C437, C419-C432, C421-C427, C431-C454, C445-C451, C450-C476, C463-C483, C470-C502, C495-C507, C514-C564, C529-C575, C542-C552, C559-C601, and C595-C607. H337 contacts Zn(2+). Positions 337–348 (HELGHNLGMDHD) match the Metal-binding motif. The active-site Proton acceptor is the E338. The Zn(2+) site is built by H341 and H347. Positions 405-491 (PAFCGNYFVE…ECPTDVLQRN (87 aa)) constitute a Disintegrin domain. Residues N410, F412, E414, E417, and D420 each contribute to the Ca(2+) site. Residue N433 is glycosylated (N-linked (GlcNAc...) asparagine). The D/ECD-tripeptide signature appears at 469-471 (ECD). Ca(2+)-binding residues include D471 and D486.

This sequence belongs to the venom metalloproteinase (M12B) family. P-III subfamily. As to quaternary structure, homodimer; disulfide-linked. Heterodimer of A and B subunits; disulfide-linked. Zn(2+) serves as cofactor. N-glycosylated. In terms of processing, the N-terminus is blocked. In terms of tissue distribution, expressed by the venom gland (at protein level). Expressed by the venom gland.

The protein localises to the secreted. The proteolytic activity of the heterodimer of A and B subunits requires Zn(2+) and Ca(2+) ions. In terms of biological role, heterodimer (A and B subunits): Zinc metalloprotease that has fibrinogenolytic and hemorrhagic activities. Cleaves insulin B chain preferably at '40-Tyr-|-Leu-41' bond, but also at '28-Gln-|-His-29' and '34-His-|-Leu-35' bonds. Hydrolyzes effectively isolated extracellular matrix (ECM) bovine fibronectin, and only slightly, basal membrane (BM) proteins human collagen IV and murine laminin, in vitro. Cleaves nidogen-1 (at '350-Ser-|-Phe-351' and '380-Tyr-|-Asn-381' bonds), but not laminin, in a solubilized BM preparation. Hydrolyzes plasma proteins involved in blood coagulation in vitro. It slightly shortens prothrombin time and significantly prolongs thrombin time. Has potent alpha-fibrinogenase activity cleaving human fibrinogen alpha chain at '441-Glu-|-Leu-442' and '539-Glu-|-Phe-540' bonds, and to a lesser extent, beta chain at '52-Lys-|-Arg-53' and '48-Pro-|-Leu-49' bonds, but does not cleave gamma chain. Hydrolyzes bovine prothrombin at '200-Ser-|-Gly-201' bond, but does not activate it, however, it cleaves fragment 1 and prethrombin 1 from it. Hydrolyzes bovine factor X heavy chain, but the cleavage does not produce an activated factor Xa heavy chain. No hydrolysis or activation of plasminogen. The ability to degrade some of the ECM, BM and plasma proteins is likely the main contributor to its hemorrhagic activity. Inhibits platelet aggregation induced by collagen in vitro. Its binding to glycosaminoglycans (GAGs) may assist in concentrating it in the proximity of blood vessel walls enabling in vivo degradation of BM protein components. Cytotoxic to cultured HeLa cancer cells in a concentration- and time-dependent manner. In the solubilized BM preparation (Matrigel), it induces morphological changes in the HeLa cells and inhibits their adhesion, however, the viability of the cells is not reduced. The polypeptide is Zinc metalloproteinase-disintegrin-like protein H4 subunit A (Vipera ammodytes ammodytes (Western sand viper)).